We begin with the raw amino-acid sequence, 264 residues long: 5'-nucleotidase SurE (264 aa).

Positions 8, 9, 39, and 95 each coordinate a divalent metal cation.

The protein belongs to the SurE nucleotidase family. A divalent metal cation serves as cofactor.

The protein localises to the cytoplasm. It carries out the reaction a ribonucleoside 5'-phosphate + H2O = a ribonucleoside + phosphate. In terms of biological role, nucleotidase that shows phosphatase activity on nucleoside 5'-monophosphates. The protein is 5'-nucleotidase SurE of Syntrophomonas wolfei subsp. wolfei (strain DSM 2245B / Goettingen).